Here is a 385-residue protein sequence, read N- to C-terminus: Chorismate synthase (385 aa).

Positions 43-63 are disordered; sequence PDLDRRRPGTSRHVTQRNEPD. Residues arginine 48 and arginine 54 each coordinate NADP(+). FMN-binding positions include 125-127, 238-239, glycine 278, 293-297, and arginine 319; these read RSS, NA, and KPTSS. Low complexity predominate over residues 363–372; the sequence is AQAPRTETAP. Residues 363–385 are disordered; sequence AQAPRTETAPATPPLDAGDDIEA.

This sequence belongs to the chorismate synthase family. Homotetramer. It depends on FMNH2 as a cofactor.

It catalyses the reaction 5-O-(1-carboxyvinyl)-3-phosphoshikimate = chorismate + phosphate. Its pathway is metabolic intermediate biosynthesis; chorismate biosynthesis; chorismate from D-erythrose 4-phosphate and phosphoenolpyruvate: step 7/7. Functionally, catalyzes the anti-1,4-elimination of the C-3 phosphate and the C-6 proR hydrogen from 5-enolpyruvylshikimate-3-phosphate (EPSP) to yield chorismate, which is the branch point compound that serves as the starting substrate for the three terminal pathways of aromatic amino acid biosynthesis. This reaction introduces a second double bond into the aromatic ring system. This Leptothrix cholodnii (strain ATCC 51168 / LMG 8142 / SP-6) (Leptothrix discophora (strain SP-6)) protein is Chorismate synthase.